The chain runs to 232 residues: MEPAVERKVPEQEEQLQPSHARAEDAPPAAVEEEDEAEAEESERRNRELKAGLHPLRRKLVLWYTRRTPGTRSQSYEDNIKKIVDFSTVESFWVCYCHLARPSSLPSPTDLHLFKEGVRPLWEDPANRNGGKWIIRFKKAVSGRFWEDLVLVLVGDQLDYSDDVCGIVLSCRFNEDILSVWNRNASDHQAVMTLRDSIKRHLKLPHTYLMEYKPHDASLRDNSSYRNTWLRG.

Basic and acidic residues predominate over residues 1–11 (MEPAVERKVPE). Residues 1–49 (MEPAVERKVPEQEEQLQPSHARAEDAPPAAVEEEDEAEAEESERRNREL) are disordered. Residues 31 to 41 (VEEEDEAEAEE) are compositionally biased toward acidic residues.

The protein belongs to the eukaryotic initiation factor 4E family. As to quaternary structure, EIF4F is a multi-subunit complex, the composition of which varies with external and internal environmental conditions. It is composed of at least EIF4A, EIF4E and EIF4G. EIF4E is also known to interact with other partners. In higher plants two isoforms of EIF4F have been identified, named isoform EIF4F and isoform EIF(iso)4F. Isoform EIF4F has subunits p220 and p26, whereas isoform EIF(iso)4F has subunits p82 and p28.

In terms of biological role, recognizes and binds the 7-methylguanosine-containing mRNA cap during an early step in the initiation of protein synthesis and facilitates ribosome binding by inducing the unwinding of the mRNAs secondary structures. The sequence is that of Eukaryotic translation initiation factor NCBP (NCBP) from Triticum aestivum (Wheat).